We begin with the raw amino-acid sequence, 270 residues long: uncharacterized protein (270 aa).

The next 10 membrane-spanning stretches (helical) occupy residues 12 to 32 (AAIV…RNVG), 35 to 55 (TLSV…PFCL), 64 to 84 (TLLG…AAIQ), 88 to 108 (VAMA…LSVL), 117 to 137 (TLLA…PYAE), 138 to 158 (LTFG…VFVL), 171 to 191 (ITFY…LMFG), 194 to 214 (GSWL…FVLF), 226 to 246 (APIL…FYFG), and 248 to 268 (TLTL…LIAW). 2 EamA domains span residues 19–133 (VLMG…LMLT) and 150–269 (LSYA…IAWR).

It belongs to the EamA transporter family.

The protein resides in the cell membrane. This is an uncharacterized protein from Archaeoglobus fulgidus (strain ATCC 49558 / DSM 4304 / JCM 9628 / NBRC 100126 / VC-16).